Consider the following 511-residue polypeptide: Light-independent protochlorophyllide reductase subunit B (511 aa).

A [4Fe-4S] cluster-binding site is contributed by aspartate 36. Aspartate 299 acts as the Proton donor in catalysis. 434-435 (GM) serves as a coordination point for substrate.

The protein belongs to the ChlB/BchB/BchZ family. In terms of assembly, protochlorophyllide reductase is composed of three subunits; ChlL, ChlN and ChlB. Forms a heterotetramer of two ChlB and two ChlN subunits. [4Fe-4S] cluster serves as cofactor.

It localises to the plastid. The protein localises to the chloroplast. The catalysed reaction is chlorophyllide a + oxidized 2[4Fe-4S]-[ferredoxin] + 2 ADP + 2 phosphate = protochlorophyllide a + reduced 2[4Fe-4S]-[ferredoxin] + 2 ATP + 2 H2O. It functions in the pathway porphyrin-containing compound metabolism; chlorophyll biosynthesis (light-independent). Component of the dark-operative protochlorophyllide reductase (DPOR) that uses Mg-ATP and reduced ferredoxin to reduce ring D of protochlorophyllide (Pchlide) to form chlorophyllide a (Chlide). This reaction is light-independent. The NB-protein (ChlN-ChlB) is the catalytic component of the complex. The protein is Light-independent protochlorophyllide reductase subunit B of Huperzia lucidula (Shining clubmoss).